The sequence spans 250 residues: Deoxynucleoside kinase (250 aa).

G27–T35 contributes to the ATP binding site. Substrate is bound by residues E52, Y70, and Q81. E104 (proton acceptor) is an active-site residue. Substrate contacts are provided by R105 and E172. A phosphoserine mark is found at S236, S241, and S243.

The protein belongs to the DCK/DGK family. Monomer.

It carries out the reaction a 2'-deoxyribonucleoside + ATP = a 2'-deoxyribonucleoside 5'-phosphate + ADP + H(+). With respect to regulation, subject to feedback inhibition by dTTP. Its function is as follows. Deoxyribonucleoside kinase that has a broad specificity phosphorylating thymidine, 2'-deoxyriboadenosine, 2'-deoxyribocytidine and 2'-deoxyriboguanosine. Specificity is higher for pyrimidine nucleosides. Several anti-viral and anti-cancer nucleoside analogs are also efficiently phosphorylated. The protein is Deoxynucleoside kinase (dnk) of Drosophila melanogaster (Fruit fly).